The chain runs to 486 residues: Beta-barrel assembly-enhancing protease (486 aa).

The first 19 residues, 1–19 (MIATLLSSLLLTGPISAGA), serve as a signal peptide directing secretion. His-134 serves as a coordination point for Zn(2+). Residue Glu-135 is part of the active site. His-138 and Glu-199 together coordinate Zn(2+). Asp-203 (proton donor) is an active-site residue.

The protein belongs to the peptidase M48 family. BepA subfamily. Zn(2+) is required as a cofactor.

It localises to the periplasm. Functions both as a chaperone and a metalloprotease. Maintains the integrity of the outer membrane by promoting either the assembly or the elimination of outer membrane proteins, depending on their folding state. The protein is Beta-barrel assembly-enhancing protease of Yersinia pestis.